We begin with the raw amino-acid sequence, 214 residues long: Neuromodulin (214 aa).

Residues 1-214 (MLCCMRRTKQ…EEAKPDQENA (214 aa)) are disordered. Residues Cys3 and Cys4 are each lipidated (S-palmitoyl cysteine). Composition is skewed to basic and acidic residues over residues 9 to 33 (KQVEKNEDGDQKIDQDGNKPEDKAH), 52 to 88 (MKDDKKDDNSEEAVENHKGEAKDEAATTENKTPKTEE), and 95 to 122 (LEVKKEAISSPAEDKKQEPSSEKPKDTP). The IQ domain occupies 32–61 (AHKAATKIQASFRGHIIRKKMKDDKKDDNS). Low complexity predominate over residues 124–133 (EENQASAESE). Basic and acidic residues-rich tracts occupy residues 150–160 (QAKEESKKADV), 168–193 (ASEKEQEKAESSQEDVKKDEVEEIKA), and 205–214 (EEAKPDQENA).

Belongs to the neuromodulin family. In terms of assembly, binds calmodulin with a greater affinity in the absence of Ca(2+) than in its presence. Palmitoylated. Palmitoylation is essential for plasma membrane association.

The protein localises to the cell membrane. It localises to the cell projection. It is found in the growth cone membrane. The protein resides in the synapse. Its subcellular location is the filopodium membrane. This protein is associated with nerve growth. It is a major component of the motile 'growth cones' that form the tips of elongating axons. Plays a role in axonal and dendritic filopodia induction. This is Neuromodulin (gap43) from Xenopus laevis (African clawed frog).